The sequence spans 1064 residues: Probable ATP-dependent DNA helicase CHR23 (1064 aa).

The Helicase ATP-binding domain occupies 398-563 (VSLYNNDYNG…WSLLNFLLPH (166 aa)). Residue 411 to 418 (DEMGLGKT) participates in ATP binding. The short motif at 513–516 (DEGH) is the DEAH box element. In terms of domain architecture, Helicase C-terminal spans 699–866 (LLDRLLPKLK…DRREMLEEIM (168 aa)). Disordered stretches follow at residues 924–955 (AYTS…AVYS) and 967–1064 (MESE…SKRN). Acidic residues predominate over residues 1002 to 1014 (ESDEEKEEEEEER). The segment covering 1048 to 1064 (SSPNSRGKGSSKGSKRN) has biased composition (low complexity).

This sequence belongs to the helicase family. As to expression, expressed in embryos, root apical meristem (RAM) and shoot apical meristem (SAM).

The protein resides in the nucleus. The catalysed reaction is ATP + H2O = ADP + phosphate + H(+). Its function is as follows. Probable chromatin-remodeling factor that is functionally redundant with CHR12 in root and shoot stem cell initiation and root apical meristem (RAM) and shoot apical meristem (SAM) maintenance. Can associate with the promoter region of WOX5. May promote seed maturation and repress initiation of germination. May repress plant growth. The sequence is that of Probable ATP-dependent DNA helicase CHR23 from Arabidopsis thaliana (Mouse-ear cress).